Consider the following 219-residue polypeptide: ADP-sugar pyrophosphatase (219 aa).

An N-acetylmethionine modification is found at M1. 2 positions are modified to phosphoserine: S3 and S10. W28 provides a ligand contact to substrate. Residue K42 forms a Glycyl lysine isopeptide (Lys-Gly) (interchain with G-Cter in SUMO2) linkage. T45 carries the post-translational modification Phosphothreonine. Residues 46-47 (WE) and R51 each bind substrate. In terms of domain architecture, Nudix hydrolase spans 57-197 (QTADGVAVIP…EEHLTVDARV (141 aa)). Y74 is subject to Phosphotyrosine. Residue R84 coordinates substrate. A96 provides a ligand contact to Mg(2+). The Nudix box motif lies at 97–118 (GLIDDGETPEAAALRELEEETG). L98 contributes to the substrate binding site. Mg(2+)-binding residues include E112 and E116. A substrate-binding site is contributed by D133. A Mg(2+)-binding site is contributed by E166. N6-acetyllysine occurs at positions 210 and 218.

The protein belongs to the Nudix hydrolase family. In terms of assembly, homodimer. Interacts with PARG. The cofactor is Mg(2+). Post-translationally, phosphorylation at Thr-45 is required for homodimer stability; dephosphorylation results in destabilization of the homodimer. Dephosphorylation at Thr-45 promotes the ATP-synthesis activity. As to expression, widely expressed. Most abundant in liver.

Its subcellular location is the nucleus. It catalyses the reaction D-ribose 5-phosphate + ATP + H(+) = ADP-D-ribose + diphosphate. The enzyme catalyses ADP-D-ribose + H2O = D-ribose 5-phosphate + AMP + 2 H(+). The catalysed reaction is 8-oxo-dGDP + H2O = 8-oxo-dGMP + phosphate + H(+). Its function is as follows. Enzyme that can either act as an ADP-sugar pyrophosphatase in absence of diphosphate or catalyze the synthesis of ATP in presence of diphosphate. In absence of diphosphate, hydrolyzes with similar activities various modified nucleoside diphosphates such as ADP-ribose, ADP-mannose, ADP-glucose, 8-oxo-GDP and 8-oxo-dGDP. Can also hydrolyze other nucleotide sugars with low activity. In presence of diphosphate, mediates the synthesis of ATP in the nucleus by catalyzing the conversion of ADP-ribose to ATP and ribose 5-phosphate. Nuclear ATP synthesis takes place when dephosphorylated at Thr-45. Nuclear ATP generation is required for extensive chromatin remodeling events that are energy-consuming. Does not play a role in U8 snoRNA decapping activity. Binds U8 snoRNA. This is ADP-sugar pyrophosphatase (NUDT5) from Homo sapiens (Human).